A 313-amino-acid polypeptide reads, in one-letter code: Ribosomal RNA small subunit methyltransferase H (313 aa).

Residues 35–37, Asp55, Phe79, Asp100, and Gln107 each bind S-adenosyl-L-methionine; that span reads GGH.

The protein belongs to the methyltransferase superfamily. RsmH family.

It localises to the cytoplasm. It catalyses the reaction cytidine(1402) in 16S rRNA + S-adenosyl-L-methionine = N(4)-methylcytidine(1402) in 16S rRNA + S-adenosyl-L-homocysteine + H(+). Its function is as follows. Specifically methylates the N4 position of cytidine in position 1402 (C1402) of 16S rRNA. This is Ribosomal RNA small subunit methyltransferase H from Burkholderia vietnamiensis (strain G4 / LMG 22486) (Burkholderia cepacia (strain R1808)).